A 464-amino-acid polypeptide reads, in one-letter code: Gasdermin-A3 (464 aa).

The segment at 1–261 (MPVFEDVTRA…EEPEEEKLIG (261 aa)) is triggers pyroptosis. 9–13 (RALVR) contacts a cardiolipin. A run of 4 beta stranded transmembrane segments spans residues 78–95 (NFSF…LVEV), 99–120 (VKVK…TLSV), 164–180 (VTVE…SLPS), and 184–198 (LGLQ…AVTI). The stretch at 255–327 (EEEKLIGEMH…DKGQKVTLEA (73 aa)) forms a coiled coil.

The protein belongs to the gasdermin family. In terms of assembly, homooligomer; homooligomeric ring-shaped pore complex containing 18-36 subunits when inserted in the membrane. In terms of processing, cleavage relieves autoinhibition by releasing the N-terminal moiety (Gasdermin-A3, N-terminal) that initiates pyroptosis. In contrast to Gsdma, not cleaved by bacterial effector protein SpeB. Post-translationally, palmitoylated. In terms of tissue distribution, highest levels in skin with weak expression in placenta and testis. Not detected in the gastrointestinal tract. In skin, expressed in postnatal hair follicles and epidermis as well as sebaceous gland basal cells.

It localises to the cytoplasm. Its subcellular location is the cytosol. The protein localises to the cell membrane. It is found in the mitochondrion membrane. The full-length protein before cleavage is inactive: intramolecular interactions between N- and C-terminal domains mediate autoinhibition in the absence of activation signal. The intrinsic pyroptosis-inducing activity is carried by the released N-terminal moiety (Gasdermin-A3, N-terminal). Precursor of a pore-forming protein involved in the transition from catagen to telogen at the end of hair follicle morphogenesis. This form constitutes the precursor of the pore: upon cleavage, the released N-terminal moiety (Gasdermin-A3, N-terminal) binds to membranes and forms pores, triggering pyroptosis. This form acts as a sensor of infection: activation is triggered by cleavage by some bacterial effector protein, which releases the N-terminal moiety (Gasdermin-A3, N-terminal). Functionally, pore-forming protein that causes membrane permeabilization and pyroptosis. Released upon cleavage by some bacterial effector protein, and binds to membrane inner leaflet lipids. Homooligomerizes within the membrane and forms pores of 10-15 nanometers (nm) of inner diameter, allowing the release of mature interleukin-1 (IL1B and IL18) and triggering pyroptosis. Binds to membrane inner leaflet lipids, including bisphosphorylated phosphatidylinositols, such as phosphatidylinositol (4,5)-bisphosphate, as well as phosphatidylinositol (3,4,5)-bisphosphate, and more weakly to monophosphorylated phosphatidylinositols. Also binds to bacterial and mitochondrial lipids, including cardiolipin, and exhibits bactericidal activity. Plays a role in the transition from catagen to telogen at the end of hair follicle morphogenesis, possibly by regulating hair follicle stem cell niche maintenance. Also required for mammary gland development. This is Gasdermin-A3 from Mus musculus (Mouse).